A 392-amino-acid chain; its full sequence is Formate-dependent phosphoribosylglycinamide formyltransferase (392 aa).

N(1)-(5-phospho-beta-D-ribosyl)glycinamide contacts are provided by residues 12-13 (EL) and Glu72. ATP contacts are provided by residues Arg104, Lys145, 150 to 155 (SSGKGQ), 185 to 188 (EAFV), and Glu193. One can recognise an ATP-grasp domain in the interval 109-300 (DLAARDLGLR…EFELHARAVL (192 aa)). 2 residues coordinate Mg(2+): Glu258 and Glu270. N(1)-(5-phospho-beta-D-ribosyl)glycinamide contacts are provided by residues Asp277, Lys348, and 355-356 (RR).

This sequence belongs to the PurK/PurT family. As to quaternary structure, homodimer.

The enzyme catalyses N(1)-(5-phospho-beta-D-ribosyl)glycinamide + formate + ATP = N(2)-formyl-N(1)-(5-phospho-beta-D-ribosyl)glycinamide + ADP + phosphate + H(+). It functions in the pathway purine metabolism; IMP biosynthesis via de novo pathway; N(2)-formyl-N(1)-(5-phospho-D-ribosyl)glycinamide from N(1)-(5-phospho-D-ribosyl)glycinamide (formate route): step 1/1. Involved in the de novo purine biosynthesis. Catalyzes the transfer of formate to 5-phospho-ribosyl-glycinamide (GAR), producing 5-phospho-ribosyl-N-formylglycinamide (FGAR). Formate is provided by PurU via hydrolysis of 10-formyl-tetrahydrofolate. The polypeptide is Formate-dependent phosphoribosylglycinamide formyltransferase (Chlorobaculum tepidum (strain ATCC 49652 / DSM 12025 / NBRC 103806 / TLS) (Chlorobium tepidum)).